The following is a 167-amino-acid chain: 3-isopropylmalate dehydratase small subunit (167 aa).

This sequence belongs to the LeuD family. LeuD type 2 subfamily. Heterodimer of LeuC and LeuD.

The enzyme catalyses (2R,3S)-3-isopropylmalate = (2S)-2-isopropylmalate. Its pathway is amino-acid biosynthesis; L-leucine biosynthesis; L-leucine from 3-methyl-2-oxobutanoate: step 2/4. Functionally, catalyzes the isomerization between 2-isopropylmalate and 3-isopropylmalate, via the formation of 2-isopropylmaleate. The chain is 3-isopropylmalate dehydratase small subunit from Sulfurimonas denitrificans (strain ATCC 33889 / DSM 1251) (Thiomicrospira denitrificans (strain ATCC 33889 / DSM 1251)).